The primary structure comprises 211 residues: Ribosomal RNA small subunit methyltransferase G (211 aa).

S-adenosyl-L-methionine contacts are provided by residues Gly79, Leu84, 130–131 (VE), and Arg145.

It belongs to the methyltransferase superfamily. RNA methyltransferase RsmG family.

The protein localises to the cytoplasm. The catalysed reaction is guanosine(527) in 16S rRNA + S-adenosyl-L-methionine = N(7)-methylguanosine(527) in 16S rRNA + S-adenosyl-L-homocysteine. In terms of biological role, specifically methylates the N7 position of guanine in position 527 of 16S rRNA. The sequence is that of Ribosomal RNA small subunit methyltransferase G from Alteromonas mediterranea (strain DSM 17117 / CIP 110805 / LMG 28347 / Deep ecotype).